A 113-amino-acid polypeptide reads, in one-letter code: Sperm-associated antigen 11B (113 aa).

The first 26 residues, 1–26 (MIPRLLPFFASLLFAALLFPGLSNAS), serve as a signal peptide directing secretion. Disulfide bonds link cysteine 80–cysteine 108, cysteine 87–cysteine 101, and cysteine 91–cysteine 109.

Belongs to the beta-defensin family.

It is found in the secreted. Its function is as follows. Has antimicrobial activity against E.coli. Plays a role in the defense response in the male reproductive tract, contributing to sperm maturation, storage and protection. The chain is Sperm-associated antigen 11B from Mus musculus (Mouse).